Here is a 1039-residue protein sequence, read N- to C-terminus: Antigenic heat-stable 120 kDa protein (1039 aa).

Disordered stretches follow at residues 1–115 (MSKD…TSDP), 408–438 (SSIE…MPQP), and 1020–1039 (QSEN…FPPR). Residues 31-44 (PISSTANKDGNPDT) show a composition bias toward polar residues. A compositionally biased stretch (basic and acidic residues) spans 54–69 (EYTEEQKQKLEQEQKE). The segment covering 85-114 (FSFTPASSTQSTPSISSLSGGISSDSQTSD) has biased composition (low complexity). Positions 424-438 (ANQPLQPETSQMPQP) are enriched in polar residues. The segment covering 1030–1039 (IKRESSFPPR) has biased composition (basic and acidic residues).

The protein localises to the cytoplasm. The protein is Antigenic heat-stable 120 kDa protein (sca4) of Rickettsia felis (strain ATCC VR-1525 / URRWXCal2) (Rickettsia azadi).